The primary structure comprises 418 residues: UDP-N-acetylglucosamine 1-carboxyvinyltransferase (418 aa).

K22 to N23 is a binding site for phosphoenolpyruvate. UDP-N-acetyl-alpha-D-glucosamine is bound at residue R92. The Proton donor role is filled by C116. C116 is modified (2-(S-cysteinyl)pyruvic acid O-phosphothioketal). UDP-N-acetyl-alpha-D-glucosamine is bound by residues R121 to L125, D305, and L327.

This sequence belongs to the EPSP synthase family. MurA subfamily.

It localises to the cytoplasm. The enzyme catalyses phosphoenolpyruvate + UDP-N-acetyl-alpha-D-glucosamine = UDP-N-acetyl-3-O-(1-carboxyvinyl)-alpha-D-glucosamine + phosphate. It functions in the pathway cell wall biogenesis; peptidoglycan biosynthesis. In terms of biological role, cell wall formation. Adds enolpyruvyl to UDP-N-acetylglucosamine. The polypeptide is UDP-N-acetylglucosamine 1-carboxyvinyltransferase (Campylobacter jejuni subsp. doylei (strain ATCC BAA-1458 / RM4099 / 269.97)).